Reading from the N-terminus, the 512-residue chain is Glutathione-binding protein GsiB (512 aa).

An N-terminal signal peptide occupies residues 1 to 26 (MTQFITHKWLAALGLASSIAAFPALA).

It belongs to the bacterial solute-binding protein 5 family. In terms of assembly, the complex is composed of two ATP-binding proteins (GsiA), two transmembrane proteins (GsiC and GsiD) and a solute-binding protein (GsiB).

The protein resides in the periplasm. Its function is as follows. Part of the ABC transporter complex GsiABCD involved in glutathione import. Binds glutathione. This is Glutathione-binding protein GsiB from Salmonella paratyphi A (strain ATCC 9150 / SARB42).